The primary structure comprises 196 residues: tRNA(Phe) 7-((3-amino-3-carboxypropyl)-4-demethylwyosine(37)-N(4))-methyltransferase 1 (196 aa).

It belongs to the TYW3 family.

The enzyme catalyses 4-demethyl-7-[(3S)-3-amino-3-carboxypropyl]wyosine(37) in tRNA(Phe) + S-adenosyl-L-methionine = 7-[(3S)-3-amino-3-carboxypropyl]wyosine(37) in tRNA(Phe) + S-adenosyl-L-homocysteine + H(+). Its function is as follows. S-adenosyl-L-methionine-dependent methyltransferase that acts as a component of the wyosine derivatives biosynthesis pathway. Probably methylates N-4 position of wybutosine-86 to produce wybutosine-72. The protein is tRNA(Phe) 7-((3-amino-3-carboxypropyl)-4-demethylwyosine(37)-N(4))-methyltransferase 1 of Pyrococcus horikoshii (strain ATCC 700860 / DSM 12428 / JCM 9974 / NBRC 100139 / OT-3).